We begin with the raw amino-acid sequence, 570 residues long: Zinc finger and BTB domain-containing protein 44 (570 aa).

Lys-4 participates in a covalent cross-link: Glycyl lysine isopeptide (Lys-Gly) (interchain with G-Cter in SUMO2). Residues 31–98 (CDITIRVQDK…AYTATLSINT (68 aa)) form the BTB domain. Phosphoserine occurs at positions 135, 159, 161, 165, 191, and 194. Disordered regions lie at residues 194–220 (SPVK…NRNQ) and 243–267 (EKVK…RRMA). A compositionally biased stretch (polar residues) spans 199–220 (GTQTSSPQVLNSSASYSENRNQ). The residue at position 200 (Thr-200) is a Phosphothreonine. Lys-290 is covalently cross-linked (Glycyl lysine isopeptide (Lys-Gly) (interchain with G-Cter in SUMO2)). The tract at residues 295–369 (SDEEVHEEVS…NAPPDDDDRL (75 aa)) is disordered. The span at 304-318 (SQPVSASQSSLSDQQ) shows a compositional bias: low complexity. A compositionally biased stretch (polar residues) spans 352–361 (TLQSTSSTNA). 4 C2H2-type zinc fingers span residues 399–421 (FQCP…MLIH), 427–449 (FQCD…RLKH), 455–479 (FRCQ…VSRH), and 487–511 (YECK…SLNH).

It localises to the nucleus. Functionally, may be involved in transcriptional regulation. This Homo sapiens (Human) protein is Zinc finger and BTB domain-containing protein 44 (ZBTB44).